We begin with the raw amino-acid sequence, 488 residues long: MSFNHHTIEELHELLVAKDISAVELTKATLEDIKAREEAVGSFITIAEEAALKQAAALDAKGIDPDNVMSGIPLAVKDNISTKGILTTAASKMLYNYEPIFDATAVANAYDKDMIIIGKTNMDEFAMGGSTETSYFKKTKNAWDRSRVPGGSSGGSATAVASGQVRLSLGSDTGGSIRQPAAFNGVVGLKPTYGAVSRYGLIAFGSSLDQIGPFAPTVRENAQLLTVIAGSDRKDSTSAPVQIADYTSKIGQDIKGMKIALPKEYLGEGIDPKIKETVLAAAKHFEKLGAIIEEVSLPHSKYGVAVYYIIASSEASSNLQRFDGIRYGFRAADAKSLEDIYVKTRSQGFGDEVKRRIMLGTFSLSSGYYDAYFKKAGQVRTLIIQDFEKVFADYDLILGPTAPTAAFELDTLNHDPVAMYLADLLTIPVNLAGLPAISIPAGFADGLPVGLQLIGPKYSEEVIYQAAAAFEATTDYHKQQPMIFGGDS.

Catalysis depends on charge relay system residues Lys-77 and Ser-152. Ser-176 acts as the Acyl-ester intermediate in catalysis.

The protein belongs to the amidase family. GatA subfamily. In terms of assembly, heterotrimer of A, B and C subunits.

It carries out the reaction L-glutamyl-tRNA(Gln) + L-glutamine + ATP + H2O = L-glutaminyl-tRNA(Gln) + L-glutamate + ADP + phosphate + H(+). In terms of biological role, allows the formation of correctly charged Gln-tRNA(Gln) through the transamidation of misacylated Glu-tRNA(Gln) in organisms which lack glutaminyl-tRNA synthetase. The reaction takes place in the presence of glutamine and ATP through an activated gamma-phospho-Glu-tRNA(Gln). The sequence is that of Glutamyl-tRNA(Gln) amidotransferase subunit A from Streptococcus equi subsp. zooepidemicus (strain MGCS10565).